The following is a 352-amino-acid chain: uncharacterized protein (352 aa).

This is an uncharacterized protein from Thermoproteus tenax (TTV1).